The sequence spans 414 residues: Serine hydroxymethyltransferase (414 aa).

Residues leucine 121 and 125–127 (GHL) each bind (6S)-5,6,7,8-tetrahydrofolate. N6-(pyridoxal phosphate)lysine is present on lysine 229.

Belongs to the SHMT family. Homodimer. Requires pyridoxal 5'-phosphate as cofactor.

The protein resides in the cytoplasm. It catalyses the reaction (6R)-5,10-methylene-5,6,7,8-tetrahydrofolate + glycine + H2O = (6S)-5,6,7,8-tetrahydrofolate + L-serine. The protein operates within one-carbon metabolism; tetrahydrofolate interconversion. It functions in the pathway amino-acid biosynthesis; glycine biosynthesis; glycine from L-serine: step 1/1. Functionally, catalyzes the reversible interconversion of serine and glycine with tetrahydrofolate (THF) serving as the one-carbon carrier. This reaction serves as the major source of one-carbon groups required for the biosynthesis of purines, thymidylate, methionine, and other important biomolecules. Also exhibits THF-independent aldolase activity toward beta-hydroxyamino acids, producing glycine and aldehydes, via a retro-aldol mechanism. The polypeptide is Serine hydroxymethyltransferase (Janthinobacterium sp. (strain Marseille) (Minibacterium massiliensis)).